A 719-amino-acid chain; its full sequence is Alpha-galactosidase 2 (719 aa).

The Nucleophile role is filled by Asp-472. The Proton donor role is filled by Asp-542.

Belongs to the glycosyl hydrolase 36 family.

It carries out the reaction Hydrolysis of terminal, non-reducing alpha-D-galactose residues in alpha-D-galactosides, including galactose oligosaccharides, galactomannans and galactolipids.. Alpha-galactosidase associated with the sucrase operon. This is Alpha-galactosidase 2 (agaS) from Pediococcus pentosaceus.